Here is a 167-residue protein sequence, read N- to C-terminus: NADH-quinone oxidoreductase subunit I 1 (167 aa).

2 4Fe-4S ferredoxin-type domains span residues 58-88 (LRRY…IDAE) and 98-127 (TRYD…EGPN). Positions 68, 71, 74, 78, 107, 110, 113, and 117 each coordinate [4Fe-4S] cluster.

This sequence belongs to the complex I 23 kDa subunit family. NDH-1 is composed of 14 different subunits. Subunits NuoA, H, J, K, L, M, N constitute the membrane sector of the complex. [4Fe-4S] cluster serves as cofactor.

It is found in the cell inner membrane. The enzyme catalyses a quinone + NADH + 5 H(+)(in) = a quinol + NAD(+) + 4 H(+)(out). Its function is as follows. NDH-1 shuttles electrons from NADH, via FMN and iron-sulfur (Fe-S) centers, to quinones in the respiratory chain. The immediate electron acceptor for the enzyme in this species is believed to be ubiquinone. Couples the redox reaction to proton translocation (for every two electrons transferred, four hydrogen ions are translocated across the cytoplasmic membrane), and thus conserves the redox energy in a proton gradient. The sequence is that of NADH-quinone oxidoreductase subunit I 1 from Cereibacter sphaeroides (strain ATCC 17029 / ATH 2.4.9) (Rhodobacter sphaeroides).